The primary structure comprises 245 residues: UPF0280 protein UNCMA_16740 (245 aa).

It belongs to the UPF0280 family.

The polypeptide is UPF0280 protein UNCMA_16740 (Methanocella arvoryzae (strain DSM 22066 / NBRC 105507 / MRE50)).